The following is a 136-amino-acid chain: uncharacterized protein (136 aa).

Helical transmembrane passes span 25–47 (ILKASILFLAIASFHLFSIPHAF) and 78–97 (ITGAFTLTALWAMAVLLLTA).

The protein resides in the cell membrane. This is an uncharacterized protein from Bacillus subtilis (strain 168).